We begin with the raw amino-acid sequence, 720 residues long: Probable ATP-dependent RNA helicase DHX35 (720 aa).

A Helicase ATP-binding domain is found at 64–229 (LYLIENYQTV…FNQNETSDPA (166 aa)). 77–84 (GETGCGKS) serves as a coordination point for ATP. The short motif at 176–179 (DEAH) is the DEAH box element. Residues 261–438 (TVETVVKIHQ…PVILQLKALG (178 aa)) enclose the Helicase C-terminal domain.

This sequence belongs to the DEAD box helicase family. DEAH subfamily. Identified in the spliceosome C complex.

The enzyme catalyses ATP + H2O = ADP + phosphate + H(+). Its function is as follows. May be involved in pre-mRNA splicing. The sequence is that of Probable ATP-dependent RNA helicase DHX35 (DHX35) from Pongo abelii (Sumatran orangutan).